We begin with the raw amino-acid sequence, 505 residues long: Retinoic acid receptor gamma (505 aa).

Disordered regions lie at residues 1 to 57 (MMKF…SSKD) and 113 to 134 (SLSV…PSPP). 2 stretches are compositionally biased toward basic and acidic residues: residues 12–22 (DGGERPEEEGK) and 32–46 (MGKE…KEEA). The tract at residues 52–142 (MSSSKDRICS…PPPPPRVYKP (91 aa)) is modulating. A compositionally biased stretch (polar residues) spans 115-124 (SVETQSTSSE). 2 NR C4-type zinc fingers span residues 143-163 (CFVC…CEGC) and 179-203 (CHRD…LQKC). A DNA-binding region (nuclear receptor) is located at residues 143-208 (CFVCNDKSSG…RLQKCFEVGM (66 aa)). Residues 209–237 (SKEAVRNDRNKKKKEIKEEVVTDSYEMPP) are hinge. Residues 238-472 (EMEALIQKVS…PLIREMLENP (235 aa)) form the NR LBD domain. A disordered region spans residues 462–505 (PPLIREMLENPEAFEDDASPPPKSEQKPIKVEEKPGEKTSTKDP). A compositionally biased stretch (basic and acidic residues) spans 485–505 (SEQKPIKVEEKPGEKTSTKDP).

This sequence belongs to the nuclear hormone receptor family. NR1 subfamily. As to quaternary structure, heterodimer; with a RXR molecule. Binds DNA preferentially as a RAR/RXR heterodimer. Isoform Delta-1A and Isoform Delta-1B are most abundant in regenerating limbs, tails, and the anterior half of the lower jaw. Isoform Delta-2 is broadly and uniformly distributed.

It localises to the nucleus. Its function is as follows. Receptor for retinoic acid. Retinoic acid receptors bind as heterodimers to their target response elements in response to their ligands, all-trans or 9-cis retinoic acid, and regulate gene expression in various biological processes. The RAR/RXR heterodimers bind to the retinoic acid response elements (RARE) composed of tandem 5'-AGGTCA-3' sites known as DR1-DR5. The chain is Retinoic acid receptor gamma (RARG) from Notophthalmus viridescens (Eastern newt).